Reading from the N-terminus, the 430-residue chain is Enolase (430 aa).

Gln168 is a binding site for (2R)-2-phosphoglycerate. Residue Glu210 is the Proton donor of the active site. Positions 247, 288, and 315 each coordinate Mg(2+). Residues Lys340, Arg369, Ser370, and Lys391 each coordinate (2R)-2-phosphoglycerate. Catalysis depends on Lys340, which acts as the Proton acceptor.

Belongs to the enolase family. Mg(2+) is required as a cofactor.

It localises to the cytoplasm. The protein localises to the secreted. The protein resides in the cell surface. It catalyses the reaction (2R)-2-phosphoglycerate = phosphoenolpyruvate + H2O. It functions in the pathway carbohydrate degradation; glycolysis; pyruvate from D-glyceraldehyde 3-phosphate: step 4/5. Its function is as follows. Catalyzes the reversible conversion of 2-phosphoglycerate (2-PG) into phosphoenolpyruvate (PEP). It is essential for the degradation of carbohydrates via glycolysis. This Picosynechococcus sp. (strain ATCC 27264 / PCC 7002 / PR-6) (Agmenellum quadruplicatum) protein is Enolase.